Consider the following 329-residue polypeptide: Tryptophan--tRNA ligase (329 aa).

Residues 9–11 (QPS) and 17–18 (GN) contribute to the ATP site. A 'HIGH' region motif is present at residues 10–18 (PSGTITLGN). D132 is a binding site for L-tryptophan. ATP-binding positions include 144 to 146 (GDD), V183, and 192 to 196 (KMSKS). Residues 192–196 (KMSKS) carry the 'KMSKS' region motif.

It belongs to the class-I aminoacyl-tRNA synthetase family. As to quaternary structure, homodimer.

The protein resides in the cytoplasm. It carries out the reaction tRNA(Trp) + L-tryptophan + ATP = L-tryptophyl-tRNA(Trp) + AMP + diphosphate + H(+). Its function is as follows. Catalyzes the attachment of tryptophan to tRNA(Trp). The protein is Tryptophan--tRNA ligase of Bacillus anthracis.